The sequence spans 191 residues: Crossover junction endodeoxyribonuclease RuvC (191 aa).

Active-site residues include D7, E67, and D140. Residues D7, E67, and D140 each contribute to the Mg(2+) site.

It belongs to the RuvC family. As to quaternary structure, homodimer which binds Holliday junction (HJ) DNA. The HJ becomes 2-fold symmetrical on binding to RuvC with unstacked arms; it has a different conformation from HJ DNA in complex with RuvA. In the full resolvosome a probable DNA-RuvA(4)-RuvB(12)-RuvC(2) complex forms which resolves the HJ. Requires Mg(2+) as cofactor.

It localises to the cytoplasm. It carries out the reaction Endonucleolytic cleavage at a junction such as a reciprocal single-stranded crossover between two homologous DNA duplexes (Holliday junction).. In terms of biological role, the RuvA-RuvB-RuvC complex processes Holliday junction (HJ) DNA during genetic recombination and DNA repair. Endonuclease that resolves HJ intermediates. Cleaves cruciform DNA by making single-stranded nicks across the HJ at symmetrical positions within the homologous arms, yielding a 5'-phosphate and a 3'-hydroxyl group; requires a central core of homology in the junction. The consensus cleavage sequence is 5'-(A/T)TT(C/G)-3'. Cleavage occurs on the 3'-side of the TT dinucleotide at the point of strand exchange. HJ branch migration catalyzed by RuvA-RuvB allows RuvC to scan DNA until it finds its consensus sequence, where it cleaves and resolves the cruciform DNA. This is Crossover junction endodeoxyribonuclease RuvC from Pelodictyon phaeoclathratiforme (strain DSM 5477 / BU-1).